Here is a 132-residue protein sequence, read N- to C-terminus: MKRVITYGTYDLLHYGHIELLRRAREMGDYLIVALSTDEFNQIKHKKSYYDYEQRKMMLESIRYVDLVIPEKGWGQKEDDVEKFDVDVFVMGHDWEGEFDFLKDKCEVIYLKRTEGISTTKIKQELYGKDAK.

Residues 9 to 10 (TY) and 14 to 17 (HYGH) contribute to the CTP site. Residue Lys-44 participates in substrate binding. Lys-46 is a binding site for CTP. Lys-77 is a substrate binding site. Residue 113-120 (RTEGISTT) coordinates CTP.

Belongs to the cytidylyltransferase family. Homotetramer or homodimer.

Its subcellular location is the cytoplasm. It carries out the reaction sn-glycerol 3-phosphate + CTP + H(+) = CDP-glycerol + diphosphate. The protein operates within cell wall biogenesis; poly(ribitol phosphate) teichoic acid biosynthesis. Catalyzes the transfer of the cytidylyl group of CTP to sn-glycerol 3-phosphate so the activated glycerol 3-phosphate can be used for teichoic acid synthesis, via incorporation into both the linkage unit by TarB and TarF. The protein is Glycerol-3-phosphate cytidylyltransferase of Staphylococcus aureus (strain NCTC 8325 / PS 47).